Reading from the N-terminus, the 615-residue chain is Pentatricopeptide repeat-containing protein At2g25580 (615 aa).

The segment at 40-98 (FGNSNDSSEMNPREGYNGRIQNRTGSSGEVSESIHTQSQSLGSNQGRNEQSWKQSPSLS) is disordered. A compositionally biased stretch (polar residues) spans 58–98 (RIQNRTGSSGEVSESIHTQSQSLGSNQGRNEQSWKQSPSLS). PPR repeat units follow at residues 288–318 (DLSS…MSEK), 319–353 (NLET…GNIP), 354–389 (DGQL…GIAP), and 390–420 (SIED…MPME). Residues 490 to 520 (SSMQEFRAGDTNLPENDELFQLLRNLKMHMV) are type E(+) motif. Residues 521 to 615 (EVGYVAETRM…NGACTCKDYW (95 aa)) form a type DYW motif region.

The protein belongs to the PPR family. PCMP-H subfamily.

The protein is Pentatricopeptide repeat-containing protein At2g25580 (PCMP-H75) of Arabidopsis thaliana (Mouse-ear cress).